A 252-amino-acid polypeptide reads, in one-letter code: 5'-nucleotidase SurE (252 aa).

A divalent metal cation contacts are provided by aspartate 8, aspartate 9, serine 39, and asparagine 95.

This sequence belongs to the SurE nucleotidase family. Requires a divalent metal cation as cofactor.

It localises to the cytoplasm. It catalyses the reaction a ribonucleoside 5'-phosphate + H2O = a ribonucleoside + phosphate. In terms of biological role, nucleotidase that shows phosphatase activity on nucleoside 5'-monophosphates. The polypeptide is 5'-nucleotidase SurE (Clostridium botulinum (strain 657 / Type Ba4)).